Consider the following 90-residue polypeptide: UPF0386 protein Rru_A2144 (90 aa).

This sequence belongs to the UPF0386 family.

This Rhodospirillum rubrum (strain ATCC 11170 / ATH 1.1.1 / DSM 467 / LMG 4362 / NCIMB 8255 / S1) protein is UPF0386 protein Rru_A2144.